The primary structure comprises 386 residues: Dual-specificity RNA methyltransferase RlmN (386 aa).

Glutamate 96 acts as the Proton acceptor in catalysis. The 239-residue stretch at 102 to 340 (ENDRATLCVS…VITRRTRGED (239 aa)) folds into the Radical SAM core domain. Cysteine 109 and cysteine 345 are oxidised to a cystine. Positions 116, 120, and 123 each coordinate [4Fe-4S] cluster. S-adenosyl-L-methionine is bound by residues 170–171 (GE), serine 202, 224–226 (SIH), and asparagine 302. The S-methylcysteine intermediate role is filled by cysteine 345.

It belongs to the radical SAM superfamily. RlmN family. Requires [4Fe-4S] cluster as cofactor.

It is found in the cytoplasm. It catalyses the reaction adenosine(2503) in 23S rRNA + 2 reduced [2Fe-2S]-[ferredoxin] + 2 S-adenosyl-L-methionine = 2-methyladenosine(2503) in 23S rRNA + 5'-deoxyadenosine + L-methionine + 2 oxidized [2Fe-2S]-[ferredoxin] + S-adenosyl-L-homocysteine. The catalysed reaction is adenosine(37) in tRNA + 2 reduced [2Fe-2S]-[ferredoxin] + 2 S-adenosyl-L-methionine = 2-methyladenosine(37) in tRNA + 5'-deoxyadenosine + L-methionine + 2 oxidized [2Fe-2S]-[ferredoxin] + S-adenosyl-L-homocysteine. Its function is as follows. Specifically methylates position 2 of adenine 2503 in 23S rRNA and position 2 of adenine 37 in tRNAs. m2A2503 modification seems to play a crucial role in the proofreading step occurring at the peptidyl transferase center and thus would serve to optimize ribosomal fidelity. The chain is Dual-specificity RNA methyltransferase RlmN from Colwellia psychrerythraea (strain 34H / ATCC BAA-681) (Vibrio psychroerythus).